A 311-amino-acid chain; its full sequence is Ribonuclease 3 (311 aa).

In terms of domain architecture, RNase III spans 20 to 145; sequence YLCFYRILGF…FIGAIYLDQG (126 aa). E62 contacts Mg(2+). D66 is an active-site residue. Positions 131 and 134 each coordinate Mg(2+). The active site involves E134. A DRBM domain is found at 173-242; it reads NFKSKLIEWS…AQMAIKKVKD (70 aa). A disordered region spans residues 250–311; sequence NEAKSQHSKP…EVEATETEKE (62 aa). Over residues 262–288 the composition is skewed to acidic residues; the sequence is VETESVEPELTESETMEPDTLETEAPE.

The protein belongs to the ribonuclease III family. Homodimer. The cofactor is Mg(2+).

It localises to the cytoplasm. The enzyme catalyses Endonucleolytic cleavage to 5'-phosphomonoester.. Its function is as follows. Digests double-stranded RNA. Involved in the processing of primary rRNA transcript to yield the immediate precursors to the large and small rRNAs (23S and 16S). Processes some mRNAs, and tRNAs when they are encoded in the rRNA operon. Processes pre-crRNA and tracrRNA of type II CRISPR loci if present in the organism. The sequence is that of Ribonuclease 3 from Bacteroides thetaiotaomicron (strain ATCC 29148 / DSM 2079 / JCM 5827 / CCUG 10774 / NCTC 10582 / VPI-5482 / E50).